We begin with the raw amino-acid sequence, 397 residues long: L-aspartate--L-methionine ligase (397 aa).

Residues 131–347 (VALNNKARIP…FFNTILKYVK (217 aa)) form the ATP-grasp domain. The ADP site is built by Lys136, Val171, Lys173, Gly183, Val186, Ile188, Glu215, Gln216, Ile218, Asn223, and Thr246. Mg(2+) is bound at residue Asp288. ADP contacts are provided by Leu290 and Ile300. A Mg(2+)-binding site is contributed by Asp301. The active-site Critical for catalysis is the Arg305.

In terms of assembly, primarily a monomer in solution. Minor homodimer formation. Mg(2+) is required as a cofactor.

It catalyses the reaction L-aspartate + L-methionine + ATP = L-aspartyl-L-methionine + ADP + phosphate + H(+). The protein operates within amino-acid metabolism. L-amino acid ligase, which preferentially catalyzes the formation of L-aspartyl-L-methionine dipeptide from L-aspartate and L-methionine in the presence of ATP. Less active with L-asparagine and L-methionine as substrates. Less active with L-aspartate and either L-phenylalanine, L-valine, L-leucine or L-isoleucine as substrates. Decreased activity when L-methionine is substituted with seleno-DL-methionine, L-homocysteine, L-methionine sulfoxide, L-methionine sulfoximine and o-acetyl-L-serine. Decreased activity with acetylation of L-methionine amino group. Decreased activity by modification of L-methionine carboxylate to L-methionine methyl ester. No activity when L-methionine is substituted with L-homoserine. No activity with formylation of L-methionine amino group. No activity by modification of L-methionine carboxylate to L-methionine-glycine carboxylate. No activity when L-aspartate substrate is replaced by analogs such as L-homoserine, DL-aspartate beta-methyl ester, L-glutamate or o-acetyl-L-serine. No activity when L-aspartate amino and alpha-carboxylate groups are modified to L-malate, glycine-L-aspartate, L-aspartate-glycine or N-carbamoyl-DL-aspartate. No activity with L-methionine or L-aspartate as sole substrates. No activity in presence of other nucleoside triphosphates including GTP, CTP, UTP, TTP or ITP. Involved in sulfur amino acid metabolism. The protein is L-aspartate--L-methionine ligase of Staphylococcus aureus (strain NCTC 8325 / PS 47).